The chain runs to 608 residues: Thiol:disulfide interchange protein DsbD (608 aa).

An N-terminal signal peptide occupies residues 1–22 (MKNLLSLCFLMLAAFTLNPAAA). A disulfide bridge connects residues Cys-135 and Cys-141. Positions 161–173 (SAPSSDAAQQTNE) are enriched in polar residues. The segment at 161 to 180 (SAPSSDAAQQTNEGEVKKSE) is disordered. The next 8 helical transmembrane spans lie at 194-214 (LLTL…PCVF), 241-261 (FFYV…VAMA), 273-293 (IVLI…FGVF), 314-334 (GGSI…ASPC), 352-372 (VVLG…PLLI), 387-407 (WMNI…VFLL), 414-434 (VASQ…FYVA), and 456-476 (SLVI…LIYP). Cys-212 and Cys-334 are disulfide-bonded. The 140-residue stretch at 469 to 608 (LAYQLIYPSS…FSAHVKSIFK (140 aa)) folds into the Thioredoxin domain. Cys-522 and Cys-525 are disulfide-bonded.

This sequence belongs to the thioredoxin family. DsbD subfamily.

It localises to the cell inner membrane. The enzyme catalyses [protein]-dithiol + NAD(+) = [protein]-disulfide + NADH + H(+). It carries out the reaction [protein]-dithiol + NADP(+) = [protein]-disulfide + NADPH + H(+). Its function is as follows. Required to facilitate the formation of correct disulfide bonds in some periplasmic proteins and for the assembly of the periplasmic c-type cytochromes. Acts by transferring electrons from cytoplasmic thioredoxin to the periplasm. This transfer involves a cascade of disulfide bond formation and reduction steps. The chain is Thiol:disulfide interchange protein DsbD from Colwellia psychrerythraea (strain 34H / ATCC BAA-681) (Vibrio psychroerythus).